Reading from the N-terminus, the 692-residue chain is 5-taurinomethyluridine-[tRNA] synthase subunit MTO1, mitochondrial (692 aa).

Residues Met-1–Leu-25 constitute a mitochondrion transit peptide. FAD-binding positions include Gly-43–Gly-48, Val-155, Ser-218, and Gln-407. Lys-508 bears the N6-methyllysine mark. Residues Ala-669 to Leu-692 form a disordered region. Positions Asn-683 to Leu-692 are enriched in basic and acidic residues.

Belongs to the MnmG family. As to quaternary structure, homodimer; forms a dimer in the presence of potassium. Interacts with GTPBP3; forms the GTPBP3-MTO1 complex composed of homodimers of GTPBP3 and MTO1. FAD is required as a cofactor.

The protein localises to the mitochondrion. It carries out the reaction 5,10-methylenetetrahydrofolate + uridine(34) in tRNA + taurine + GTP + A + H2O = 5-taurinomethyluridine(34) in tRNA + 7,8-dihydrofolate + GDP + AH2 + phosphate + H(+). In terms of biological role, component of the GTPBP3-MTO1 complex that catalyzes the 5-taurinomethyluridine (taum(5)U) modification at the 34th wobble position (U34) of mitochondrial tRNAs (mt-tRNAs), which plays a role in mt-tRNA decoding and mitochondrial translation. Taum(5)U formation on mammalian mt-tRNA requires the presence of both GTPBP3-mediated GTPase activity and MTO1 catalytic activity. The polypeptide is 5-taurinomethyluridine-[tRNA] synthase subunit MTO1, mitochondrial (MTO1) (Macaca fascicularis (Crab-eating macaque)).